A 549-amino-acid chain; its full sequence is Movement protein Hsp70h (549 aa).

It belongs to the heat shock protein 70 family.

Its subcellular location is the virion. Its function is as follows. Transports viral genome to neighboring plant cells directly through plasmosdesmata, without any budding. The movement protein allows efficient cell to cell propagation, by bypassing the host cell wall barrier. Two movement proteins, p6, Hsp70h and three structural proteins, CP, CPm, and P64 are essential for cell-cell movement. Also plays a role in virion formation. Together with CPm and p64, encapsidates the 5'-terminal portion of the viral genome. This is Movement protein Hsp70h from Vitis vinifera (Grape).